The chain runs to 276 residues: Bis(5'-nucleosyl)-tetraphosphatase, symmetrical (276 aa).

Belongs to the Ap4A hydrolase family.

It catalyses the reaction P(1),P(4)-bis(5'-adenosyl) tetraphosphate + H2O = 2 ADP + 2 H(+). Functionally, hydrolyzes diadenosine 5',5'''-P1,P4-tetraphosphate to yield ADP. In Dechloromonas aromatica (strain RCB), this protein is Bis(5'-nucleosyl)-tetraphosphatase, symmetrical.